Reading from the N-terminus, the 306-residue chain is Ribosomal RNA small subunit methyltransferase H (306 aa).

S-adenosyl-L-methionine contacts are provided by residues 33–35 (GGY), aspartate 51, phenylalanine 78, aspartate 96, and glutamine 103.

Belongs to the methyltransferase superfamily. RsmH family.

Its subcellular location is the cytoplasm. The catalysed reaction is cytidine(1402) in 16S rRNA + S-adenosyl-L-methionine = N(4)-methylcytidine(1402) in 16S rRNA + S-adenosyl-L-homocysteine + H(+). Specifically methylates the N4 position of cytidine in position 1402 (C1402) of 16S rRNA. This is Ribosomal RNA small subunit methyltransferase H from Rickettsia felis (strain ATCC VR-1525 / URRWXCal2) (Rickettsia azadi).